An 821-amino-acid chain; its full sequence is PX domain-containing protein C1450.12 (821 aa).

The 140-residue stretch at 171-310 (AYVLGVRQST…SFLTDDPVTL (140 aa)) folds into the PX domain. The interval 235 to 271 (KDDHDTYLNSSEDSTLSPLPSRSSDTNDPQSDSQHVL) is disordered. A compositionally biased stretch (polar residues) spans 241 to 268 (YLNSSEDSTLSPLPSRSSDTNDPQSDSQ). Phosphothreonine occurs at positions 260 and 597. Composition is skewed to acidic residues over residues 737–746 (GDEDDQDEND) and 754–766 (EHMEDDDSVEEFD). The interval 737–766 (GDEDDQDENDQVTKVEEEHMEDDDSVEEFD) is disordered. Residue serine 761 is modified to Phosphoserine.

It localises to the mitochondrion membrane. In Schizosaccharomyces pombe (strain 972 / ATCC 24843) (Fission yeast), this protein is PX domain-containing protein C1450.12.